The following is a 325-amino-acid chain: Pectinesterase A (325 aa).

Residues 1 to 18 form the signal peptide; the sequence is MRVQSYLSLFSLVGAALC. Asn126 is a glycosylation site (N-linked (GlcNAc...) asparagine). Gln143 serves as a coordination point for substrate. Residue Asp166 is the Proton donor of the active site. The active-site Nucleophile is the Asp187. 2 residues coordinate substrate: Arg247 and Trp249.

This sequence belongs to the pectinesterase family.

Its subcellular location is the secreted. The enzyme catalyses [(1-&gt;4)-alpha-D-galacturonosyl methyl ester](n) + n H2O = [(1-&gt;4)-alpha-D-galacturonosyl](n) + n methanol + n H(+). Its pathway is glycan metabolism; pectin degradation; 2-dehydro-3-deoxy-D-gluconate from pectin: step 1/5. Involved in maceration and soft-rotting of plant tissue. Active against citrus pectin. This Emericella nidulans (strain FGSC A4 / ATCC 38163 / CBS 112.46 / NRRL 194 / M139) (Aspergillus nidulans) protein is Pectinesterase A (pmeA).